The primary structure comprises 144 residues: Large ribosomal subunit protein uL13 (144 aa).

Residues 125-144 (YRGPEHPHQAQKPQPLEVKA) form a disordered region.

Belongs to the universal ribosomal protein uL13 family. Part of the 50S ribosomal subunit.

This protein is one of the early assembly proteins of the 50S ribosomal subunit, although it is not seen to bind rRNA by itself. It is important during the early stages of 50S assembly. This Aquifex aeolicus (strain VF5) protein is Large ribosomal subunit protein uL13.